The chain runs to 240 residues: Enoyl-CoA delta isomerase 2, peroxisomal (240 aa).

A Microbody targeting signal motif is present at residues 238–240 (PKL).

It belongs to the enoyl-CoA hydratase/isomerase family.

The protein localises to the peroxisome. The catalysed reaction is a (3Z)-enoyl-CoA = a 4-saturated (2E)-enoyl-CoA. It catalyses the reaction a (3E)-enoyl-CoA = a 4-saturated (2E)-enoyl-CoA. The protein operates within lipid metabolism; fatty acid beta-oxidation. Its function is as follows. Able to isomerize both 3-cis and 3-trans double bonds into the 2-trans form in a range of enoyl-CoA species. Essential for the beta oxidation of unsaturated fatty acids. Involved with IBR1 and IBR3 in the peroxisomal beta-oxidation of indole-3-butyric acid (IBA) to form indole-3-acetic acid (IAA), a biologically active auxin. This Arabidopsis thaliana (Mouse-ear cress) protein is Enoyl-CoA delta isomerase 2, peroxisomal.